A 123-amino-acid polypeptide reads, in one-letter code: uncharacterized protein (123 aa).

The interval 1 to 28 is disordered; that stretch reads MGLGSSKRKEEPPHKSEPKTVGRVKRAG. Residues 7-20 show a composition bias toward basic and acidic residues; sequence KRKEEPPHKSEPKT.

This sequence belongs to the TUSC2 family.

This is an uncharacterized protein from Caenorhabditis elegans.